A 269-amino-acid chain; its full sequence is MGTESGSDPESSSNGWSRARGLVVKTLVLIGGALLIKRLTKSTTRRDHARVVSRSLTGEKFTREQASRDPDNYFNIRMLSCPAAEMVDGSEVLYLEQAFWRTPQKPFRQRLYMVKPCPKELKCDVEVSSYAIRDAEEYKNFCDRPKDQRPLPEEVIGDIGEHLTTIHLNCCDRGKRCLYEGSTSPGGFPNSWNGASYCTSDLAVLKNNEIHLWDRGFDENRNQVWGPKEGPYEFKPATSSSINENLSALNILYQSSIDKPIQGSLILQD.

Residues 19–36 (ARGLVVKTLVLIGGALLI) traverse the membrane as a helical segment.

It belongs to the CpcT/CpeT biliprotein lyase family. In terms of tissue distribution, mostly expressed in shoot apices, to a lower extent, in leaves, inflorescence stems, buds and cotyledons, and, at low levels, in roots and siliques.

The protein localises to the plastid. It localises to the chloroplast outer membrane. Covalently attaches a chromophore to Cys residue(s) of phycobiliproteins. Required for plastid division, and involved in cell differentiation and regulation of the cell division plane. Maintenance of plastid homeostasis controls plant preconditioning to stress and stress acclimation. In terms of biological role, confers sensitivity to cabbage leaf curl virus (CaLCuV), probably by supporting viral movement. This chain is Chromophore lyase CRL, chloroplastic (CRL), found in Arabidopsis thaliana (Mouse-ear cress).